We begin with the raw amino-acid sequence, 337 residues long: Putative NAC domain-containing protein 94 (337 aa).

In terms of domain architecture, NAC spans 20-191; the sequence is VLPGFRFHPT…AWAICRIFKK (172 aa).

Its subcellular location is the nucleus. This chain is Putative NAC domain-containing protein 94 (ANAC094), found in Arabidopsis thaliana (Mouse-ear cress).